A 469-amino-acid polypeptide reads, in one-letter code: Argininosuccinate lyase (469 aa).

It belongs to the lyase 1 family. Argininosuccinate lyase subfamily.

It is found in the cytoplasm. It catalyses the reaction 2-(N(omega)-L-arginino)succinate = fumarate + L-arginine. The protein operates within amino-acid biosynthesis; L-arginine biosynthesis; L-arginine from L-ornithine and carbamoyl phosphate: step 3/3. The chain is Argininosuccinate lyase from Burkholderia cenocepacia (strain ATCC BAA-245 / DSM 16553 / LMG 16656 / NCTC 13227 / J2315 / CF5610) (Burkholderia cepacia (strain J2315)).